Here is a 433-residue protein sequence, read N- to C-terminus: Protein translocase subunit SecY (433 aa).

A run of 10 helical transmembrane segments spans residues 17 to 37 (IIFT…PIAG), 71 to 91 (IFAL…LMSV), 117 to 137 (LTVL…ESIV), 141 to 161 (GPVV…TLVV), 184 to 204 (LIIF…MFEL), 212 to 232 (PLVA…IIFF), 268 to 288 (GVIP…LANF), 309 to 329 (IYIL…TAIV), 366 to 386 (LTVV…LLMN), and 388 to 408 (YVIS…VVLD).

It belongs to the SecY/SEC61-alpha family. In terms of assembly, component of the Sec protein translocase complex. Heterotrimer consisting of SecY, SecE and SecG subunits. The heterotrimers can form oligomers, although 1 heterotrimer is thought to be able to translocate proteins. Interacts with the ribosome. Interacts with SecDF, and other proteins may be involved. Interacts with SecA.

The protein resides in the cell inner membrane. In terms of biological role, the central subunit of the protein translocation channel SecYEG. Consists of two halves formed by TMs 1-5 and 6-10. These two domains form a lateral gate at the front which open onto the bilayer between TMs 2 and 7, and are clamped together by SecE at the back. The channel is closed by both a pore ring composed of hydrophobic SecY resides and a short helix (helix 2A) on the extracellular side of the membrane which forms a plug. The plug probably moves laterally to allow the channel to open. The ring and the pore may move independently. In Rickettsia bellii (strain RML369-C), this protein is Protein translocase subunit SecY.